The chain runs to 402 residues: MSKRTLASLTAADLEGKRVLVRVDFNVPLDGNGKITDDTRIRAALPTIRYLSESGAKVILVSHFGRPKGKPVESMRLTPVAERLSELLGRPVVKTTDAVGAGAEAQVAATSNGQVVLLENVRFHAEEEANDAEFAKALASLADIYVNDAFGAAHRAHASTAGVTEYLSPCVAGYLLEKELQYLQAAIDNPQRPLAAIVGGSKVSSKIGVIETLLDKCDKLLIGGGMIFTFYKAQGLSVGGSLVEEDKLDLARSLMAKAQEKGVQLLLPVDVVVADKFAPDANAKTVAIDAIPDGWMGLDIGPESVKQFEEALADCRSVIWNGPMGVFEFDQFAVGTEAIARSLAGLTRKGATTIIGGGDSVAAVEKVGVASEMSHISTGGGASLELLEGKVLPGVAALDDAA.

Residues 24-26 (DFN), R40, 63-66 (HFGR), R122, and R155 each bind substrate. Residues K206, G297, E328, and 357-360 (GGDS) each bind ATP.

It belongs to the phosphoglycerate kinase family. As to quaternary structure, monomer.

The protein localises to the cytoplasm. The catalysed reaction is (2R)-3-phosphoglycerate + ATP = (2R)-3-phospho-glyceroyl phosphate + ADP. Its pathway is carbohydrate degradation; glycolysis; pyruvate from D-glyceraldehyde 3-phosphate: step 2/5. This Synechococcus elongatus (strain ATCC 33912 / PCC 7942 / FACHB-805) (Anacystis nidulans R2) protein is Phosphoglycerate kinase.